The sequence spans 500 residues: Cytochrome P450 71B26 (500 aa).

The chain crosses the membrane as a helical span at residues 1 to 21 (MDSIWILSLLFFIIFLLLAAF). C440 contacts heme.

The protein belongs to the cytochrome P450 family. It depends on heme as a cofactor.

The protein resides in the membrane. The protein is Cytochrome P450 71B26 (CYP71B26) of Arabidopsis thaliana (Mouse-ear cress).